The following is an 84-amino-acid chain: Small ribosomal subunit protein uS17 (84 aa).

It belongs to the universal ribosomal protein uS17 family. In terms of assembly, part of the 30S ribosomal subunit.

In terms of biological role, one of the primary rRNA binding proteins, it binds specifically to the 5'-end of 16S ribosomal RNA. This chain is Small ribosomal subunit protein uS17, found in Blochmanniella pennsylvanica (strain BPEN).